A 249-amino-acid chain; its full sequence is Tetraspanin-18 (249 aa).

Residues 1–13 are Cytoplasmic-facing; it reads MEGDCLSCMKYLM. The chain crosses the membrane as a helical span at residues 14–34; the sequence is FVFNFFIFLGGACLLGIGIWV. Over 35–49 the chain is Extracellular; sequence MVDPTGFREIVAANP. The chain crosses the membrane as a helical span at residues 50–70; the sequence is LLITGAYILLAMGGLLFLLGF. At 71–83 the chain is on the cytoplasmic side; sequence LGCCGAVRENKCL. Residues 84 to 104 traverse the membrane as a helical segment; it reads LLFFFLFILIIFLAELSAAIL. The Extracellular portion of the chain corresponds to 105-223; sequence AFIFRGNLTR…AFETYVYLAG (119 aa). 2 N-linked (GlcNAc...) asparagine glycosylation sites follow: Asn-111 and Asn-129. The chain crosses the membrane as a helical span at residues 224 to 244; sequence ALAIGVLAIELFAMIFAMCLF. Over 245–249 the chain is Cytoplasmic; sequence RGIIQ.

The protein belongs to the tetraspanin (TM4SF) family. In terms of assembly, interacts with ORAI1; this interaction regulates ORAI1 exit from the endoplasmic (ER), and/or Golgi, and trafficking to the cell surface.

The protein resides in the membrane. In terms of biological role, plays a role in the cell surface localization of ORAI1 and may participate in the regulation of Ca(2+) signaling and the VWF release in response to inflammatory stimuli. The chain is Tetraspanin-18 from Bos taurus (Bovine).